Consider the following 439-residue polypeptide: Serine/threonine-protein kinase 2 (439 aa).

The Protein kinase domain occupies 87 to 439; the sequence is NDDFYHISTG…IFSDWINGRN (353 aa). ATP contacts are provided by residues 93 to 101 and Lys-117; that span reads ISTGGYGIV. Asp-307 acts as the Proton acceptor in catalysis.

Belongs to the protein kinase superfamily. Ser/Thr protein kinase family. Poxviruses subfamily. Phosphorylated in vivo. Autophosphorylated in vitro.

It localises to the host endoplasmic reticulum. The protein localises to the host endoplasmic reticulum-Golgi intermediate compartment. The enzyme catalyses L-seryl-[protein] + ATP = O-phospho-L-seryl-[protein] + ADP + H(+). It carries out the reaction L-threonyl-[protein] + ATP = O-phospho-L-threonyl-[protein] + ADP + H(+). Essential serine-protein kinase involved in the early stage of virion morphogenesis. The protein is Serine/threonine-protein kinase 2 (OPG054) of Homo sapiens (Human).